The chain runs to 997 residues: uncharacterized protein (997 aa).

It belongs to the MG414/MG415 family.

This is an uncharacterized protein from Mycoplasma pneumoniae (strain ATCC 29342 / M129 / Subtype 1) (Mycoplasmoides pneumoniae).